The chain runs to 759 residues: Mitogen-activated protein kinase kinase kinase 1a (759 aa).

Composition is skewed to basic and acidic residues over residues 1–17, 25–36, and 52–64; these read MIEERGSSRGSREDRGS, SFEDKGSSHDWK, and AKKDRNYDAKVDS. Disordered regions lie at residues 1 to 90, 122 to 160, 165 to 184, and 195 to 239; these read MIEE…NLSK, LGIEASDWESRRKSAVYSRPTSPPRVSHDTGQSSYSHDF, SRVDSSLESPPLSPRGLAPM, and RKHR…PDPL. The segment covering 72 to 85 has biased composition (low complexity); it reads VHSTSSPRLSPASS. One can recognise a Protein kinase domain in the interval 426–679; it reads WAKGEFLGSG…CDMLLAHPFI (254 aa). Residues 432–440 and lysine 454 each bind ATP; that span reads LGSGTFGSV. Aspartate 549 (proton acceptor) is an active-site residue.

Belongs to the protein kinase superfamily. STE Ser/Thr protein kinase family. MAP kinase kinase kinase subfamily.

It is found in the cell membrane. It carries out the reaction L-seryl-[protein] + ATP = O-phospho-L-seryl-[protein] + ADP + H(+). The enzyme catalyses L-threonyl-[protein] + ATP = O-phospho-L-threonyl-[protein] + ADP + H(+). Functionally, the CERK1, MEKK1a/b, MKK1a/b/c and MPK4a/b proteins are involved in pathogen defense. The pathway induces rapid growth inhibition, cell wall depositions and accumulation of defense-related transcripts. This protein is required for responses to chitin and acts redundantly with MEKK1b. The polypeptide is Mitogen-activated protein kinase kinase kinase 1a (Physcomitrium patens (Spreading-leaved earth moss)).